The following is a 1225-amino-acid chain: uncharacterized protein (1225 aa).

Positions 1–15 (MSSQAEPSKGASNAD) are enriched in polar residues. The tract at residues 1 to 104 (MSSQAEPSKG…VDGVPTRPVS (104 aa)) is disordered. Residues 16–25 (PNEKVEKMHL) show a composition bias toward basic and acidic residues. Polar residues predominate over residues 43-65 (ASPSDKNNLNPQSAGVSEVQVQD). The helical transmembrane segment at 167-187 (FLFGYLRFGFLSLFIIMAVCI) threads the bilayer. One can recognise an SMP-LTD domain in the interval 217–422 (DSETVTWLNT…SPNVYELDIE (206 aa)). C2 domains lie at 413 to 534 (SPNV…NDAF), 559 to 668 (DSGE…LLWF), and 685 to 803 (KPAQ…GALM). The residue at position 843 (Ser-843) is a Phosphoserine. The segment at 867-890 (PESQKTPTAVDNTSTSRGSTSVKT) is disordered. Over residues 869-890 (SQKTPTAVDNTSTSRGSTSVKT) the composition is skewed to polar residues. The C2 4 domain maps to 1019–1137 (RLTPVPVKLE…QQQQQTNYEI (119 aa)). Asp-1053, Asp-1059, Asp-1107, Asp-1109, and Asp-1115 together coordinate Ca(2+).

Requires Ca(2+) as cofactor.

It is found in the endoplasmic reticulum membrane. This is an uncharacterized protein from Schizosaccharomyces pombe (strain 972 / ATCC 24843) (Fission yeast).